Reading from the N-terminus, the 1400-residue chain is DNA-directed RNA polymerase subunit beta (1400 aa).

The protein belongs to the RNA polymerase beta chain family. As to quaternary structure, the RNAP catalytic core consists of 2 alpha, 1 beta, 1 beta' and 1 omega subunit. When a sigma factor is associated with the core the holoenzyme is formed, which can initiate transcription.

The catalysed reaction is RNA(n) + a ribonucleoside 5'-triphosphate = RNA(n+1) + diphosphate. DNA-dependent RNA polymerase catalyzes the transcription of DNA into RNA using the four ribonucleoside triphosphates as substrates. The chain is DNA-directed RNA polymerase subunit beta from Acidiphilium cryptum (strain JF-5).